A 259-amino-acid chain; its full sequence is Ribonuclease HII (259 aa).

In terms of domain architecture, RNase H type-2 spans 70 to 258; the sequence is TLIAGIDEVG…VKSLVLGKKE (189 aa). A divalent metal cation is bound by residues Asp-76, Glu-77, and Asp-168.

Belongs to the RNase HII family. Mn(2+) is required as a cofactor. It depends on Mg(2+) as a cofactor.

It localises to the cytoplasm. It carries out the reaction Endonucleolytic cleavage to 5'-phosphomonoester.. Endonuclease that specifically degrades the RNA of RNA-DNA hybrids. The sequence is that of Ribonuclease HII from Streptococcus pneumoniae (strain 70585).